The following is a 208-amino-acid chain: Cytidylate kinase (208 aa).

9 to 17 (GPSASGKSS) is an ATP binding site.

This sequence belongs to the cytidylate kinase family. Type 1 subfamily.

It localises to the cytoplasm. It carries out the reaction CMP + ATP = CDP + ADP. It catalyses the reaction dCMP + ATP = dCDP + ADP. The chain is Cytidylate kinase from Thermus thermophilus (strain ATCC BAA-163 / DSM 7039 / HB27).